The sequence spans 228 residues: Small ribosomal subunit protein uS7m (228 aa).

Residues M1–P33 constitute a mitochondrion transit peptide.

Belongs to the universal ribosomal protein uS7 family. In terms of assembly, component of the mitochondrial ribosome small subunit (28S) which comprises a 12S rRNA and about 30 distinct proteins.

It localises to the mitochondrion. The chain is Small ribosomal subunit protein uS7m (mrps7) from Danio rerio (Zebrafish).